Here is a 389-residue protein sequence, read N- to C-terminus: MALNLKIGDIVQNKYRIEKLINRGGMNSYLFLASNLHVQEFGPLQKRQFTRLVLKVVQRTDKINDNNWKKFLDGTITTTRVSHKNLVQTFDVVSPRLSVLSENQVIVLEDTVMIVMEYVDGPSLREMLNQKGYFSVQEVVYYFTKLVKVINYLHSFEHQIIHRDLKPENILFTSNLTDIKLLDFGIASAVIRNAEKTEVLTDENSLFGTVSYMTPEVLESTVNKEGKRIRKPPTVQYDIYSLGVILFEMLVGRVPFNKSIDPKKERETIQKARNFDVPLMGNLRSDVPVSLENIVFKCTAVKRENSKWMYSDTKQLLADLAQWQTEQTLIKPVHERILEGQNEMRELMVSNYLPWYLRKGVLIFFSVVLLALLIAVVSFFIITGVVVHS.

Positions 15 to 356 (YRIEKLINRG…LMVSNYLPWY (342 aa)) constitute a Protein kinase domain. Asp-164 acts as the Proton acceptor in catalysis.

It belongs to the protein kinase superfamily. Ser/Thr protein kinase family.

The enzyme catalyses L-seryl-[protein] + ATP = O-phospho-L-seryl-[protein] + ADP + H(+). It catalyses the reaction L-threonyl-[protein] + ATP = O-phospho-L-threonyl-[protein] + ADP + H(+). The polypeptide is Putative serine/threonine-protein kinase (Mycoplasma pneumoniae (strain ATCC 29342 / M129 / Subtype 1) (Mycoplasmoides pneumoniae)).